Reading from the N-terminus, the 216-residue chain is Large ribosomal subunit protein uL3 (216 aa).

Position 157 is an N5-methylglutamine (glutamine 157).

The protein belongs to the universal ribosomal protein uL3 family. In terms of assembly, part of the 50S ribosomal subunit. Forms a cluster with proteins L14 and L19. Methylated by PrmB.

Functionally, one of the primary rRNA binding proteins, it binds directly near the 3'-end of the 23S rRNA, where it nucleates assembly of the 50S subunit. The protein is Large ribosomal subunit protein uL3 of Xanthomonas campestris pv. campestris (strain 8004).